Here is a 1201-residue protein sequence, read N- to C-terminus: MSDPASTSIPAHATNGEAHAPNDHHHAQLPLSDSKPVSVNRKKQKRRQKQAARLAAERQFGNGHISADMSEQNGLSPTAPASHVSDDHDLDERANGETYYEEIHDATHDLDDHPPNLSNGQPGQQNATARKSKKKKGKKNRAGSQTMGDESSTPLSTPSVSMSQHLPPPLPSHLPHTLLKTSKDRSIWNTSTQEERENIKTFWLELGEEERRQLVKVEKDAVLKKMKEQQKHSCSCTVCGRKRTAIEEELEVLYDAYYEELEQYANNNQGSFEKGPPMVPPPRLYHPPLRSPGQHTRTQGQFHPSRGRIHELPEDDEDLEEDYDEDDEDDEPYSDDEYEDEETRAARADFFAFGNSLTVKGRRQIMLLSFIFPKPVTNLIFTLADGILTVADDLLKNDGKHFIDMMEQLAERRMQREEDTQYGIAAAHQSLHGGHNHGPLDDDDYDEEEDEDYDSQEDEDYEEDEMVSSGNWPGGDAVQADSFLQDAMTEEQRMEEGRRMFQIFAARMFEQRVLTAYREKVAEQRQQKLIEELMEEQTRNEQRNAKKAREAQKRKDKKKLQKQAKEEEKARREAEKAAEEAAAKAEQEKKLEEQRRKREEQKKKREAERKAQEAERLRKEAEKQKRLREERERQAEIERKQREQKELEKKRREEARQNELREKKTKDERERKLREAAPKTDYEGQEKRDPQAKRVSHTGPVPIPASLQHAQALPAYLQSPHYQIATPIVPKAPTPARPRQPSQQGSHTSSPRSQPASTEPSQVSISPRSMAPSQSSGASSVTSKQGHGQPPLLHHPQPSTPLSPLGALNRSHPPGFSPSNPPGLGLVARPPIGHELPSYPPHSGPLMNQLRGFPAPNGLPVLPGMNGTRPMPPGRGFPLDPGHGLAFHQQPIANAFAAQPSGLSHAHSRQPSSSFERSPLDAHAFPISRPSPIKRPSSTQQDQNNRSAQRDVDDLSAHLGSSALLDDSDVPFTSNLSQSLPGATAPGTLPGPTRASFAGTSLFADPLAAKHSGFPIGPSVGNTWSTQIPFGTSPFPSAPTWGTGPGSGWSNNAFAPGGHHRAHTSRPVTIRLLVIQACKQLNMMSPSKGASGYHDVKVVLRQVDQLRPVNEPPISLKEMLDICDTEGNSQNGGGSFSIRSDETGECVKFEPDTNSASSGHRGSIVPGEIGSPVPSSSLPAFGGIGSSTPSVLRQFSSPTGF.

Disordered regions lie at residues 1–178, 268–341, 429–478, 535–707, 724–848, 899–952, and 1150–1169; these read MSDP…PHTL, NQGS…YEDE, QSLH…GDAV, EEQT…PASL, IATP…PLMN, QPSG…QRDV, and EPDT…PGEI. The segment covering 40–50 has biased composition (basic residues); the sequence is NRKKQKRRQKQ. Residues 84 to 114 are compositionally biased toward basic and acidic residues; the sequence is VSDDHDLDERANGETYYEEIHDATHDLDDHP. Over residues 116-128 the composition is skewed to polar residues; sequence NLSNGQPGQQNAT. Residues 130-141 are compositionally biased toward basic residues; the sequence is RKSKKKKGKKNR. Composition is skewed to polar residues over residues 145-164 and 293-302; these read QTMG…SMSQ and GQHTRTQGQF. Composition is skewed to acidic residues over residues 313-341 and 441-466; these read PEDD…YEDE and DDDD…EDEM. Positions 520-673 form a coiled coil; the sequence is KVAEQRQQKL…KTKDERERKL (154 aa). 2 stretches are compositionally biased toward basic and acidic residues: residues 535 to 553 and 563 to 692; these read EEQT…EAQK and QAKE…DPQA. The span at 740–767 shows a compositional bias: polar residues; sequence QPSQQGSHTSSPRSQPASTEPSQVSISP. Low complexity-rich tracts occupy residues 769–805 and 926–938; these read SMAP…LSPL and PISR…RPSS.

It belongs to the NST1 family.

It localises to the cytoplasm. Its function is as follows. May act as a negative regulator of salt tolerance. This Aspergillus niger (strain ATCC MYA-4892 / CBS 513.88 / FGSC A1513) protein is Stress response protein nst1 (nst1).